The chain runs to 594 residues: MAIFAMGWQKPDNVAGSSAPAIMVGLFVATGGLLLGYDTGTINGILAMKSFKDHFSTGYIDGNGQPGIYPKESALIVAMLSAGTAIGALLAAPLGDHYGRRRSLIGAIGIFVIGAILQVCAYNIDLLVAGRTVAGVGIGIVSVLVPLYQSEMAPKWIRGTLVCTYQLSITMGLLAAAVVNILTYKLKTAAAYRVPIGLQLTWACVLALGLTVLPETPRYLIKRGDKNAAALSLSRLRRLDITHPALVEELAEIEANHQYEMALGPDSYKDILFGEPHLGRRTFTGCCLQMLQQLTGVNFIMYYGTTFFNNAGVGNPFKISLIMQVINTASTIPGLFVVESWGRRRLLMVGAIGMAICQLLIAAFATASGSNNLSAQNKVLITFVAIYIFFFAASWGPVVWVVTSEIYPLKVRAKSMSITTASNWFLNFGIAYGTPYMQTNSAASDESSIDLGSKVFFVWGAFCIVAVGFVWCMVYETSKISLEQIDEMYERVDHAWHSRRFEPSWSFQEMRDLGFSDGGIPPTQQLQQQPQQPQQQQQQHHQQQQHQLQVDLQQSQSRTSNSSTSQTDTGGSNNTGASQDDKLVASLGNIDLSY.

Topologically, residues 1-13 are cytoplasmic; sequence MAIFAMGWQKPDN. Residues 14–34 traverse the membrane as a helical segment; that stretch reads VAGSSAPAIMVGLFVATGGLL. Residues 35 to 73 are Extracellular-facing; it reads LGYDTGTINGILAMKSFKDHFSTGYIDGNGQPGIYPKES. The chain crosses the membrane as a helical span at residues 74 to 94; sequence ALIVAMLSAGTAIGALLAAPL. Residues 95–103 lie on the Cytoplasmic side of the membrane; that stretch reads GDHYGRRRS. A helical transmembrane segment spans residues 104-124; it reads LIGAIGIFVIGAILQVCAYNI. A topological domain (extracellular) is located at residue D125. The helical transmembrane segment at 126 to 146 threads the bilayer; the sequence is LLVAGRTVAGVGIGIVSVLVP. Residues 147–159 are Cytoplasmic-facing; sequence LYQSEMAPKWIRG. Residues 160-180 traverse the membrane as a helical segment; the sequence is TLVCTYQLSITMGLLAAAVVN. Residues 181 to 193 are Extracellular-facing; the sequence is ILTYKLKTAAAYR. A helical membrane pass occupies residues 194 to 214; the sequence is VPIGLQLTWACVLALGLTVLP. Over 215–293 the chain is Cytoplasmic; that stretch reads ETPRYLIKRG…TGCCLQMLQQ (79 aa). Residues 294-314 traverse the membrane as a helical segment; the sequence is LTGVNFIMYYGTTFFNNAGVG. At 315–318 the chain is on the extracellular side; the sequence is NPFK. Residues 319–339 form a helical membrane-spanning segment; it reads ISLIMQVINTASTIPGLFVVE. Topologically, residues 340 to 345 are cytoplasmic; sequence SWGRRR. A helical transmembrane segment spans residues 346-366; that stretch reads LLMVGAIGMAICQLLIAAFAT. At 367-378 the chain is on the extracellular side; sequence ASGSNNLSAQNK. N-linked (GlcNAc...) asparagine glycosylation is present at N372. A helical membrane pass occupies residues 379 to 403; that stretch reads VLITFVAIYIFFFAASWGPVVWVVT. The Cytoplasmic segment spans residues 404-415; that stretch reads SEIYPLKVRAKS. The chain crosses the membrane as a helical span at residues 416-436; that stretch reads MSITTASNWFLNFGIAYGTPY. Residues 437–454 lie on the Extracellular side of the membrane; the sequence is MQTNSAASDESSIDLGSK. The helical transmembrane segment at 455-475 threads the bilayer; the sequence is VFFVWGAFCIVAVGFVWCMVY. Residues 476 to 594 are Cytoplasmic-facing; the sequence is ETSKISLEQI…ASLGNIDLSY (119 aa). The tract at residues 512–594 is disordered; the sequence is DLGFSDGGIP…ASLGNIDLSY (83 aa). The segment covering 524–576 has biased composition (low complexity); that stretch reads QQLQQQPQQPQQQQQQHHQQQQHQLQVDLQQSQSRTSNSSTSQTDTGGSNNTG.

The protein belongs to the major facilitator superfamily. Sugar transporter (TC 2.A.1.1) family.

Its subcellular location is the membrane. In terms of biological role, probable glucose transporter. Involved in sugar transport, carbon catabolite repression, and initiation of conidiophore development. This chain is Probable glucose transporter rco-3 (rco-3), found in Neurospora crassa (strain ATCC 24698 / 74-OR23-1A / CBS 708.71 / DSM 1257 / FGSC 987).